A 372-amino-acid polypeptide reads, in one-letter code: Actin-related protein T3 (372 aa).

This sequence belongs to the actin family. Interacts with PFN3. In terms of tissue distribution, ubiquitously expressed.

Its subcellular location is the cytoplasm. It is found in the cytoskeleton. The protein resides in the nucleus. This chain is Actin-related protein T3 (ACTRT3), found in Homo sapiens (Human).